A 267-amino-acid polypeptide reads, in one-letter code: 3-methyl-2-oxobutanoate hydroxymethyltransferase (267 aa).

Residues aspartate 45 and aspartate 84 each contribute to the Mg(2+) site. 3-methyl-2-oxobutanoate is bound by residues 45-46 (DS), aspartate 84, and lysine 113. Glutamate 115 provides a ligand contact to Mg(2+). Glutamate 182 serves as the catalytic Proton acceptor.

It belongs to the PanB family. As to quaternary structure, homodecamer; pentamer of dimers. Mg(2+) serves as cofactor.

The protein resides in the cytoplasm. It catalyses the reaction 3-methyl-2-oxobutanoate + (6R)-5,10-methylene-5,6,7,8-tetrahydrofolate + H2O = 2-dehydropantoate + (6S)-5,6,7,8-tetrahydrofolate. The protein operates within cofactor biosynthesis; coenzyme A biosynthesis. Catalyzes the reversible reaction in which hydroxymethyl group from 5,10-methylenetetrahydrofolate is transferred onto alpha-ketoisovalerate to form ketopantoate. The sequence is that of 3-methyl-2-oxobutanoate hydroxymethyltransferase from Sulfurisphaera tokodaii (strain DSM 16993 / JCM 10545 / NBRC 100140 / 7) (Sulfolobus tokodaii).